Here is a 289-residue protein sequence, read N- to C-terminus: Acetyl-coenzyme A carboxylase carboxyl transferase subunit beta (289 aa).

In terms of domain architecture, CoA carboxyltransferase N-terminal spans 30–289 (IWRECPRCHS…SNAWRANHDK (260 aa)). Zn(2+)-binding residues include cysteine 34, cysteine 37, cysteine 52, and cysteine 55. The segment at 34–55 (CPRCHSRFYYRRFGNFDVCPEC) adopts a C4-type zinc-finger fold.

This sequence belongs to the AccD/PCCB family. Acetyl-CoA carboxylase is a heterohexamer composed of biotin carboxyl carrier protein (AccB), biotin carboxylase (AccC) and two subunits each of ACCase subunit alpha (AccA) and ACCase subunit beta (AccD). Zn(2+) serves as cofactor.

Its subcellular location is the cytoplasm. It catalyses the reaction N(6)-carboxybiotinyl-L-lysyl-[protein] + acetyl-CoA = N(6)-biotinyl-L-lysyl-[protein] + malonyl-CoA. It functions in the pathway lipid metabolism; malonyl-CoA biosynthesis; malonyl-CoA from acetyl-CoA: step 1/1. Functionally, component of the acetyl coenzyme A carboxylase (ACC) complex. Biotin carboxylase (BC) catalyzes the carboxylation of biotin on its carrier protein (BCCP) and then the CO(2) group is transferred by the transcarboxylase to acetyl-CoA to form malonyl-CoA. This Oenococcus oeni (strain ATCC BAA-331 / PSU-1) protein is Acetyl-coenzyme A carboxylase carboxyl transferase subunit beta.